We begin with the raw amino-acid sequence, 362 residues long: MNGDRRDPTSPPRLLVAASGTGGHIFPALAVVEQLPTWQIEWLGVPQRLEAKLVPDRYPLHRVAMSGWQGSPWQKLGSLVQLARATLQVRQILASGQFDVVLTTGGYIAAPTILAARSLGVPVLLHESNCLPGKVTRWLGRFCRLVALGMAETAEHLPGAVTRVVGTPVRAEFYQPQPLPADLPIPEGDPLIVVMGGSQGARGLNRLVAACAPAWLEAGAWIVHLTGGSEVGIPSHPRYRAFPFRADVAALLQRATFAISRAGALSLAELWATATPAILIPYPFAAEDHQYHNALAFVGRGGGVVMRESEANLDLLRQTALAWLAQPQVVAQMAANLKATAPPAASKAVARLLQEICRDSAR.

Residues 21-23, Asn-129, Arg-170, Ser-198, and Gln-290 contribute to the UDP-N-acetyl-alpha-D-glucosamine site; that span reads TGG.

Belongs to the glycosyltransferase 28 family. MurG subfamily.

The protein localises to the cell inner membrane. It carries out the reaction di-trans,octa-cis-undecaprenyl diphospho-N-acetyl-alpha-D-muramoyl-L-alanyl-D-glutamyl-meso-2,6-diaminopimeloyl-D-alanyl-D-alanine + UDP-N-acetyl-alpha-D-glucosamine = di-trans,octa-cis-undecaprenyl diphospho-[N-acetyl-alpha-D-glucosaminyl-(1-&gt;4)]-N-acetyl-alpha-D-muramoyl-L-alanyl-D-glutamyl-meso-2,6-diaminopimeloyl-D-alanyl-D-alanine + UDP + H(+). It participates in cell wall biogenesis; peptidoglycan biosynthesis. In terms of biological role, cell wall formation. Catalyzes the transfer of a GlcNAc subunit on undecaprenyl-pyrophosphoryl-MurNAc-pentapeptide (lipid intermediate I) to form undecaprenyl-pyrophosphoryl-MurNAc-(pentapeptide)GlcNAc (lipid intermediate II). The polypeptide is UDP-N-acetylglucosamine--N-acetylmuramyl-(pentapeptide) pyrophosphoryl-undecaprenol N-acetylglucosamine transferase (Synechococcus sp. (strain JA-3-3Ab) (Cyanobacteria bacterium Yellowstone A-Prime)).